The sequence spans 732 residues: Elongation factor 2 (732 aa).

A tr-type G domain is found at 19-260 (ERIRNIDIAA…MVIKNLPNPR (242 aa)). GTP-binding positions include 28-35 (AHIDHGKT), 94-98 (DTPGH), and 148-151 (NKVD). His-598 bears the Diphthamide mark.

This sequence belongs to the TRAFAC class translation factor GTPase superfamily. Classic translation factor GTPase family. EF-G/EF-2 subfamily.

It is found in the cytoplasm. Functionally, catalyzes the GTP-dependent ribosomal translocation step during translation elongation. During this step, the ribosome changes from the pre-translocational (PRE) to the post-translocational (POST) state as the newly formed A-site-bound peptidyl-tRNA and P-site-bound deacylated tRNA move to the P and E sites, respectively. Catalyzes the coordinated movement of the two tRNA molecules, the mRNA and conformational changes in the ribosome. The protein is Elongation factor 2 of Picrophilus torridus (strain ATCC 700027 / DSM 9790 / JCM 10055 / NBRC 100828 / KAW 2/3).